Here is a 615-residue protein sequence, read N- to C-terminus: Proteasome-associated ATPase (615 aa).

Residues 1–27 are disordered; it reads MSESERSEASEVFGTSPDSRLSSEDAA. Positions 22-99 form a coiled coil; that stretch reads SSEDAAELEQ…LREEVDRLGQ (78 aa). 302 to 307 contacts ATP; sequence GCGKTL. Positions 614–615 are docks into pockets in the proteasome alpha-ring; sequence YL.

It belongs to the AAA ATPase family. Homohexamer. Assembles into a hexameric ring structure that caps the 20S proteasome core. Strongly interacts with the prokaryotic ubiquitin-like protein Pup through a hydrophobic interface; the interacting region of ARC lies in its N-terminal coiled-coil domain. There is one Pup binding site per ARC hexamer ring. Upon ATP-binding, the C-terminus of ARC interacts with the alpha-rings of the proteasome core, possibly by binding to the intersubunit pockets.

Its pathway is protein degradation; proteasomal Pup-dependent pathway. In terms of biological role, ATPase which is responsible for recognizing, binding, unfolding and translocation of pupylated proteins into the bacterial 20S proteasome core particle. May be essential for opening the gate of the 20S proteasome via an interaction with its C-terminus, thereby allowing substrate entry and access to the site of proteolysis. Thus, the C-termini of the proteasomal ATPase may function like a 'key in a lock' to induce gate opening and therefore regulate proteolysis. This Mycolicibacterium vanbaalenii (strain DSM 7251 / JCM 13017 / BCRC 16820 / KCTC 9966 / NRRL B-24157 / PYR-1) (Mycobacterium vanbaalenii) protein is Proteasome-associated ATPase.